A 268-amino-acid chain; its full sequence is Calpain small subunit 1 (268 aa).

M1 is subject to N-acetylmethionine. Residue S6 is modified to Phosphoserine. Residues 96–130 (EEVRQFRKLFVQLAGDDMEVSATELMNILNKVVTR) enclose the EF-hand 1; atypical domain. Ca(2+)-binding residues include A109, D112, E114, E119, D137, D152, D154, T156, K158, and E163. 4 consecutive EF-hand domains span residues 139–172 (FGID…NNIK), 169–204 (NNIK…AGFH), 205–233 (LNEH…ISCL), and 234–268 (VRLD…TMYS). K179 is subject to N6-acetyllysine. The Ca(2+) site is built by D182, D184, S186, T188, E193, and D225.

In terms of assembly, homodimer or heterodimer of a large (catalytic) and a small (regulatory) subunit. In presence of calcium, the heterodimer dissociates.

The protein localises to the cytoplasm. Its subcellular location is the cell membrane. Regulatory subunit of the calcium-regulated non-lysosomal thiol-protease which catalyzes limited proteolysis of substrates involved in cytoskeletal remodeling and signal transduction. Essential for embryonic development. The protein is Calpain small subunit 1 (Capns1) of Mus musculus (Mouse).